A 148-amino-acid polypeptide reads, in one-letter code: Transcription antitermination protein NusB (148 aa).

The protein belongs to the NusB family.

Its function is as follows. Involved in transcription antitermination. Required for transcription of ribosomal RNA (rRNA) genes. Binds specifically to the boxA antiterminator sequence of the ribosomal RNA (rrn) operons. The sequence is that of Transcription antitermination protein NusB from Novosphingobium aromaticivorans (strain ATCC 700278 / DSM 12444 / CCUG 56034 / CIP 105152 / NBRC 16084 / F199).